The sequence spans 112 residues: UPF0342 protein SUB0718 (112 aa).

It belongs to the UPF0342 family.

The chain is UPF0342 protein SUB0718 from Streptococcus uberis (strain ATCC BAA-854 / 0140J).